The chain runs to 298 residues: GTP cyclohydrolase FolE2 (298 aa).

Belongs to the GTP cyclohydrolase IV family.

The catalysed reaction is GTP + H2O = 7,8-dihydroneopterin 3'-triphosphate + formate + H(+). It participates in cofactor biosynthesis; 7,8-dihydroneopterin triphosphate biosynthesis; 7,8-dihydroneopterin triphosphate from GTP: step 1/1. Its function is as follows. Converts GTP to 7,8-dihydroneopterin triphosphate. In Neisseria meningitidis serogroup A / serotype 4A (strain DSM 15465 / Z2491), this protein is GTP cyclohydrolase FolE2.